The following is a 329-amino-acid chain: Endochitinase A (329 aa).

The first 23 residues, 1-23, serve as a signal peptide directing secretion; that stretch reads MRLCKFTALSSLLFSLLLLSASA. Positions 24–65 constitute a Chitin-binding type-1 domain; it reads EQCGSQAGGARCPSGLCCSKFGWCGNTNDYCGPGNCQSQCPG. 4 cysteine pairs are disulfide-bonded: Cys-26/Cys-41, Cys-35/Cys-47, Cys-40/Cys-54, and Cys-59/Cys-63. At Pro-67 the chain carries 4-hydroxyproline; partial. 4-hydroxyproline occurs at positions 69, 71, 72, and 74. Pro-75 carries the post-translational modification 4-hydroxyproline; partial. Cystine bridges form between Cys-101/Cys-163, Cys-175/Cys-183, and Cys-282/Cys-314. The Proton donor role is filled by Glu-145. Positions 323–329 are cleaved as a propeptide — removed in mature form; that stretch reads GLLVDTM.

This sequence belongs to the glycosyl hydrolase 19 family. Chitinase class I subfamily. Post-translationally, the 4-hydroxyproline residues are not glycosylated in this plant vacuolar protein.

It localises to the vacuole. The catalysed reaction is Random endo-hydrolysis of N-acetyl-beta-D-glucosaminide (1-&gt;4)-beta-linkages in chitin and chitodextrins.. Its function is as follows. Defense against chitin-containing fungal pathogens. This chain is Endochitinase A (CHN48), found in Nicotiana tabacum (Common tobacco).